The sequence spans 709 residues: Early transcription factor 82 kDa subunit (709 aa).

Belongs to the poxviridae VETF large subunit family. As to quaternary structure, heterodimer of a 70 kDa and a 82 kDa subunit. Part of the early transcription complex composed of ETF, RAP94, and the DNA-directed RNA polymerase.

The protein localises to the virion. Acts with RNA polymerase to initiate transcription from early gene promoters. Is recruited by the RPO-associated protein of 94 kDa (RAP94) to form the early transcription complex, which also contains the core RNA polymerase. ETF heterodimer binds to early gene promoters. In Vertebrata (FPV), this protein is Early transcription factor 82 kDa subunit (VETFL).